Reading from the N-terminus, the 347-residue chain is Protein RecA (347 aa).

67-74 (GPESSGKT) lines the ATP pocket.

Belongs to the RecA family.

Its subcellular location is the cytoplasm. Can catalyze the hydrolysis of ATP in the presence of single-stranded DNA, the ATP-dependent uptake of single-stranded DNA by duplex DNA, and the ATP-dependent hybridization of homologous single-stranded DNAs. It interacts with LexA causing its activation and leading to its autocatalytic cleavage. This is Protein RecA from Paenarthrobacter aurescens (strain TC1).